A 211-amino-acid polypeptide reads, in one-letter code: Claudin-1 (211 aa).

Residues 1–7 (MANAGLQ) are Cytoplasmic-facing. The chain crosses the membrane as a helical span at residues 8 to 28 (LLGFILASLGWIGSIVSTALP). Over 29–81 (QWKIYSYAGDNIVTAQAIYEGLWMSCVSQSTGQIQCKVFDSLLNLNSTLQATR) the chain is Extracellular. A disulfide bridge connects residues Cys-54 and Cys-64. Residues 82–102 (ALMVIGILLGLIAIFVSTIGM) form a helical membrane-spanning segment. Topologically, residues 103–115 (KCMRCLEDDEVQK) are cytoplasmic. The chain crosses the membrane as a helical span at residues 116–136 (MWMAVIGGIIFVISGLATLVA). The Extracellular portion of the chain corresponds to 137-163 (TAWYGNRIVQEFYDPMTPVNARYEFGQ). Residues 164 to 184 (ALFTGWAAASLCLLGGALLSC) traverse the membrane as a helical segment. The Cytoplasmic segment spans residues 185–211 (SCPRKTTSYPTPRPYPKPTPSSGKDYV). A disordered region spans residues 190–211 (TTSYPTPRPYPKPTPSSGKDYV). Residues 210–211 (YV) are interactions with TJP1, TJP2, TJP3 and PATJ.

This sequence belongs to the claudin family. Can form homo- and heteropolymers with other CLDN. Homopolymers interact with CLDN3, but not CLDN2, homopolymers. Directly interacts with TJP1/ZO-1, TJP2/ZO-2 and TJP3/ZO-3. Interacts with MPDZ and PATJ. Interacts with OCLN, CD81, CLDN4, CLDN6 and CLDN9. Detected in epididymis (at protein level). Detected in testis and epididymis.

The protein resides in the cell junction. Its subcellular location is the tight junction. The protein localises to the cell membrane. It is found in the basolateral cell membrane. Functionally, claudins function as major constituents of the tight junction complexes that regulate the permeability of epithelia. While some claudin family members play essential roles in the formation of impermeable barriers, others mediate the permeability to ions and small molecules. Often, several claudin family members are coexpressed and interact with each other, and this determines the overall permeability. CLDN1 is required to prevent the paracellular diffusion of small molecules through tight junctions in the epidermis and is required for the normal barrier function of the skin. Required for normal water homeostasis and to prevent excessive water loss through the skin, probably via an indirect effect on the expression levels of other proteins, since CLDN1 itself seems to be dispensable for water barrier formation in keratinocyte tight junctions. The protein is Claudin-1 (Cldn1) of Rattus norvegicus (Rat).